A 707-amino-acid polypeptide reads, in one-letter code: DNA ligase (707 aa).

Residues 1 to 23 (MSSKATQDPEAVLAEQSDDATEA) are disordered. Residues 53 to 57 (DAEFD), 103 to 104 (SL), and glutamate 133 contribute to the NAD(+) site. Lysine 135 serves as the catalytic N6-AMP-lysine intermediate. NAD(+) is bound by residues arginine 156, glutamate 196, lysine 315, and lysine 339. 4 residues coordinate Zn(2+): cysteine 433, cysteine 436, cysteine 452, and cysteine 458. The region spanning 622–707 (SIERTLDGLS…LENGPDTPDS (86 aa)) is the BRCT domain.

This sequence belongs to the NAD-dependent DNA ligase family. LigA subfamily. Mg(2+) is required as a cofactor. Requires Mn(2+) as cofactor.

The enzyme catalyses NAD(+) + (deoxyribonucleotide)n-3'-hydroxyl + 5'-phospho-(deoxyribonucleotide)m = (deoxyribonucleotide)n+m + AMP + beta-nicotinamide D-nucleotide.. In terms of biological role, DNA ligase that catalyzes the formation of phosphodiester linkages between 5'-phosphoryl and 3'-hydroxyl groups in double-stranded DNA using NAD as a coenzyme and as the energy source for the reaction. It is essential for DNA replication and repair of damaged DNA. The polypeptide is DNA ligase (Mycolicibacterium vanbaalenii (strain DSM 7251 / JCM 13017 / BCRC 16820 / KCTC 9966 / NRRL B-24157 / PYR-1) (Mycobacterium vanbaalenii)).